Reading from the N-terminus, the 146-residue chain is UPF0310 protein YdcG (146 aa).

It belongs to the UPF0310 family.

The protein is UPF0310 protein YdcG (ydcG) of Bacillus subtilis (strain 168).